Here is a 475-residue protein sequence, read N- to C-terminus: FAD-dependent monooxygenase sdgC (475 aa).

Residues Met-1–Ser-23 form the signal peptide. Residues Glu-35, Gly-49, and Arg-126 each contribute to the FAD site. Asn-236 carries N-linked (GlcNAc...) asparagine glycosylation. FAD is bound at residue Ala-330. A helical transmembrane segment spans residues Ile-446–Ile-466.

The protein belongs to the paxM FAD-dependent monooxygenase family. The cofactor is FAD.

It localises to the membrane. The protein operates within secondary metabolite biosynthesis. Functionally, FAD-dependent monooxygenase; part of the gene cluster that mediates the biosynthesis of the polyenes aspernidgulenes. The carbon backbone of aspernidgulenes is synthesized by the HR-PKS sdgA, which accepts acetyl-CoA as the starter unit and performs malonyl-CoA extensions as well as regioselective methylation and reduction. The resulting nonaketide offloads the HR-PKS by intramolecular lactonization to yield the 5,6-dihydro-alpha-pyrone-containing hexaenoic acids preaspernidgulene A1 and A2. The FAD-dependent monooxygenase sdgC then installs the first epoxide on the penultimate double bond. Subsequently, the FAD-dependent monooxygenase sdgF presumably generates a ketone intermediate through Meinwald rearrangement involving a hydride shift. Next, sdgC introduces another epoxide on the last olefin of the ketone intermediate after E/Z isomerization. The epoxide hydrolase sdgD then catalyzes stereospecific cyclization of the 5,6-dihydro-alpha-pyrone and opening of the epoxide ring to form an oxygenated trimethylcyclopentanone and an oxabicyclo[2.2.1]heptane unit. Finally, the bicyclic unit undergoes hydrolytic cleavage, either spontaneously or catalyzed by sdgD, to assemble the dimethyl-gamma-lactone moiety in aspernidgulene A1. This is FAD-dependent monooxygenase sdgC from Emericella nidulans (strain FGSC A4 / ATCC 38163 / CBS 112.46 / NRRL 194 / M139) (Aspergillus nidulans).